The primary structure comprises 284 residues: Gigasin-3a (284 aa).

The disordered stretch occupies residues 202-284; the sequence is GLDNPLPNPR…FKAGRKNNRN (83 aa). Positions 223–245 are enriched in low complexity; the sequence is SSPLPESTPKSSTKTSSASPIKS. The span at 246–257 shows a compositional bias: basic residues; the sequence is RQGKKLRGKKQN. A compositionally biased stretch (polar residues) spans 258-267; the sequence is KTGNTRFTYR. A compositionally biased stretch (basic residues) spans 268-284; the sequence is NNKRNIKFKAGRKNNRN.

In terms of tissue distribution, component of the organic matrix of calcified shell layers.

The protein is Gigasin-3a of Magallana gigas (Pacific oyster).